A 1225-amino-acid polypeptide reads, in one-letter code: ABC transporter B family member 18 (1225 aa).

The next 6 membrane-spanning stretches (helical) occupy residues 23–43 (MALG…IFFI), 70–90 (VALV…GYCW), 146–168 (LPNF…LLLW), 172–194 (IVGF…ALIR), 252–272 (GIAI…TWYG), and 284–304 (GTVS…GQSL). In terms of domain architecture, ABC transmembrane type-1 1 spans 23 to 312 (MALGLIGAVG…SLSNLKYFSE (290 aa)). The 237-residue stretch at 347 to 583 (VEFNHVKFTY…LDGQYTSLVR (237 aa)) folds into the ABC transporter 1 domain. Residue 382-389 (GGSGSGKS) coordinates ATP. The N-linked (GlcNAc...) asparagine glycan is linked to Asn-530. A run of 2 helical transmembrane segments spans residues 657–677 (ALYG…YSYS) and 699–719 (IYVL…ISQH). One can recognise an ABC transmembrane type-1 2 domain in the interval 657 to 945 (ALYGCLGAAL…AGTMTKDLVK (289 aa)). An N-linked (GlcNAc...) asparagine glycan is attached at Asn-754. 4 helical membrane-spanning segments follow: residues 780-800 (LLVQ…VISW), 804-824 (IVMM…RVLL), 880-900 (SWLA…VSAL), and 919-939 (FLEI…AGTM). 2 N-linked (GlcNAc...) asparagine glycosylation sites follow: Asn-960 and Asn-1000. Positions 980–1218 (ISFSNVDFAY…GPKGAYFSLV (239 aa)) constitute an ABC transporter 2 domain. Residue 1015 to 1022 (GPSGSGKS) participates in ATP binding. Asn-1201 carries N-linked (GlcNAc...) asparagine glycosylation.

Belongs to the ABC transporter superfamily. ABCB family. Multidrug resistance exporter (TC 3.A.1.201) subfamily.

The protein localises to the membrane. This chain is ABC transporter B family member 18 (ABCB18), found in Arabidopsis thaliana (Mouse-ear cress).